Reading from the N-terminus, the 362-residue chain is E3 ubiquitin-protein ligase rififylin (362 aa).

Residues 17 to 37 (ETPPPQGARTQAYSNPGYSSF) form a disordered region. The span at 24–37 (ARTQAYSNPGYSSF) shows a compositional bias: polar residues. The segment at 41–93 (TGSEPSCKACGVHFASTTRKQTCLDCKKNFCMTCSSQEGNGPRLCLLCLRFRA) adopts an FYVE-type zinc-finger fold. An SAP 1 domain is found at 101 to 120 (LMKMKVKDLRDYLSLHDIST). The interval 162-183 (LTQPQSSTVPPTSPGLPSSPAQ) is disordered. Phosphoserine occurs at positions 225, 228, 231, and 239. Positions 249–263 (IEGLTVRQLKEILAR) constitute an SAP 2 domain. An RING-type zinc finger spans residues 315–350 (CKICMDSPIDCVLLECGHMVTCTKCGKRMNECPICR).

In terms of assembly, interacts with CASP8 and CASP10. Interacts with RIPK1 (via protein kinase domain); involved in RIPK1 ubiquitination. Interacts with PRR5L. Interacts (via RING-type zinc finger) with p53/TP53; involved in p53/TP53 ubiquitination. Interacts (via RING-type zinc finger) with MDM2; the interaction stabilizes MDM2. In terms of processing, autoubiquitinated. Post-translationally, palmitoylated. Undergoes caspase-mediated cleavage upon death-receptor activation, by TNFSF10 for instance. May be mediated by the caspases CASP8 and CASP10 in a negative feedback loop. In terms of tissue distribution, ubiquitous. Detected in cerebrum, cerebellum, midbrain, brain stem, hippocampus, striatum, liver, heart, lung, kidney, muscle, spleen and testis.

The protein resides in the cytoplasm. It localises to the cytosol. It is found in the cell membrane. Its subcellular location is the recycling endosome membrane. It carries out the reaction S-ubiquitinyl-[E2 ubiquitin-conjugating enzyme]-L-cysteine + [acceptor protein]-L-lysine = [E2 ubiquitin-conjugating enzyme]-L-cysteine + N(6)-ubiquitinyl-[acceptor protein]-L-lysine.. It participates in protein modification; protein ubiquitination. Its function is as follows. E3 ubiquitin-protein ligase that regulates several biological processes through the ubiquitin-mediated proteasomal degradation of various target proteins. Mediates 'Lys-48'-linked polyubiquitination of PRR5L and its subsequent proteasomal degradation thereby indirectly regulating cell migration through the mTORC2 complex. Also ubiquitinates the caspases CASP8 and CASP10, promoting their proteasomal degradation, to negatively regulate apoptosis downstream of death domain receptors. Also negatively regulates the tumor necrosis factor-mediated signaling pathway through targeting of RIPK1 to ubiquitin-mediated proteasomal degradation. Negatively regulates p53/TP53 through its direct ubiquitination and targeting to proteasomal degradation. Indirectly, may also negatively regulate p53/TP53 through ubiquitination and degradation of SFN. May also play a role in endocytic recycling. This Rattus norvegicus (Rat) protein is E3 ubiquitin-protein ligase rififylin.